We begin with the raw amino-acid sequence, 441 residues long: Tol-Pal system protein TolB (441 aa).

The N-terminal stretch at 1-39 (MPAMTPAFRRADLTGFLRTYGAALILLLAAMLAWQPAQA) is a signal peptide.

Belongs to the TolB family. As to quaternary structure, the Tol-Pal system is composed of five core proteins: the inner membrane proteins TolA, TolQ and TolR, the periplasmic protein TolB and the outer membrane protein Pal. They form a network linking the inner and outer membranes and the peptidoglycan layer.

It localises to the periplasm. Functionally, part of the Tol-Pal system, which plays a role in outer membrane invagination during cell division and is important for maintaining outer membrane integrity. In Bordetella parapertussis (strain 12822 / ATCC BAA-587 / NCTC 13253), this protein is Tol-Pal system protein TolB.